The chain runs to 263 residues: MKNAFKDALKAGRPQIGLWLGLANSYSAELLAGAGFDWLLIDGEHAPNNVQTVLTQLQAIAPYPSQPVVRPSWNDPVQIKQLLDVGAQTLLIPMVQNADEARNAVAATRYPPAGIRGVGSALARASRWNRIPDYLHQANDAMCVLVQIETREAMSNLASILDVDGIDGVFIGPADLSADMGFAGNPQHPEVQAAIENAIVQIRAAGKAPGILMANEALAKRYLELGALFVAVGVDTTLLARGAEALAARFGAEKKLSGASGVY.

The Proton acceptor role is filled by His45. Gln147 provides a ligand contact to substrate. Residue Glu149 coordinates a divalent metal cation. Residues Ala174 and Asp175 each coordinate substrate. Asp175 provides a ligand contact to a divalent metal cation.

Belongs to the HpcH/HpaI aldolase family. As to quaternary structure, homohexamer; trimer of dimers. A divalent metal cation serves as cofactor.

The catalysed reaction is 4-hydroxy-2-oxoheptanedioate = succinate semialdehyde + pyruvate. It participates in aromatic compound metabolism; 4-hydroxyphenylacetate degradation; pyruvate and succinate semialdehyde from 4-hydroxyphenylacetate: step 7/7. Catalyzes the reversible retro-aldol cleavage of 4-hydroxy-2-ketoheptane-1,7-dioate (HKHD) to pyruvate and succinic semialdehyde. The sequence is that of 4-hydroxy-2-oxo-heptane-1,7-dioate aldolase from Salmonella enteritidis PT4 (strain P125109).